The following is a 476-amino-acid chain: Membrane-bound lytic murein transglycosylase F (476 aa).

Residues 1–15 form the signal peptide; that stretch reads MRSFLLILFCVSLLT. A non-LT domain region spans residues 16–258; it reads GCQGERVDAA…HLNEKYFAHV (243 aa). An LT domain region spans residues 259–476; that stretch reads KRFDYVDTRA…QSEISAAQPN (218 aa). Glu-303 is a catalytic residue. The disordered stretch occupies residues 456-476; the sequence is EAQQQTAEKQSQSEISAAQPN.

In the N-terminal section; belongs to the bacterial solute-binding protein 3 family. It in the C-terminal section; belongs to the transglycosylase Slt family.

It localises to the cell outer membrane. The catalysed reaction is Exolytic cleavage of the (1-&gt;4)-beta-glycosidic linkage between N-acetylmuramic acid (MurNAc) and N-acetylglucosamine (GlcNAc) residues in peptidoglycan, from either the reducing or the non-reducing ends of the peptidoglycan chains, with concomitant formation of a 1,6-anhydrobond in the MurNAc residue.. Its function is as follows. Murein-degrading enzyme that degrades murein glycan strands and insoluble, high-molecular weight murein sacculi, with the concomitant formation of a 1,6-anhydromuramoyl product. Lytic transglycosylases (LTs) play an integral role in the metabolism of the peptidoglycan (PG) sacculus. Their lytic action creates space within the PG sacculus to allow for its expansion as well as for the insertion of various structures such as secretion systems and flagella. The chain is Membrane-bound lytic murein transglycosylase F from Shewanella loihica (strain ATCC BAA-1088 / PV-4).